The sequence spans 2177 residues: Brefeldin A-inhibited guanine nucleotide-exchange protein 3 (2177 aa).

Over residues 282 to 295 (TSSTSTSLESDSAS) the composition is skewed to low complexity. The tract at residues 282 to 301 (TSSTSTSLESDSASPGVSDH) is disordered. Serine 471 carries the phosphoserine modification. Positions 511 to 524 (TGQTTLEGELGQTT) are enriched in polar residues. Disordered regions lie at residues 511–542 (TGQT…PAIP), 617–636 (AAEK…DNCS), and 1031–1076 (DGAS…LSTA). An SEC7 domain is found at 583–796 (RTRSYGSRYS…EELYHQVLDR (214 aa)). Basic and acidic residues predominate over residues 618–627 (AEKDSGRSDV). Phosphoserine occurs at positions 632 and 636. The segment covering 1032 to 1047 (GASQPPLTISQPQKAT) has biased composition (polar residues). At serine 1049 the chain carries Phosphoserine. The chain crosses the membrane as a helical span at residues 1492-1512 (GPGFGIYAVVHLLLPVMSVWL). Disordered regions lie at residues 1848 to 1877 (STDS…GKEK), 1946 to 2004 (ESST…RKKE), and 2033 to 2064 (KQQH…SPLL). Positions 1960-1974 (TPSEDDRSQSREHMG) are enriched in basic and acidic residues. The residue at position 1991 (serine 1991) is a Phosphoserine. Composition is skewed to basic and acidic residues over residues 1993-2004 (KVEKKDPSRKKE) and 2043-2052 (KEVKVEKKGE). Phosphoserine occurs at positions 2079, 2081, 2095, 2101, and 2103. Residues 2082-2103 (AGPELLRQDKRPRSGSTGSSLS) form a disordered region.

As to quaternary structure, interacts with PHB2. Expressed in breast cancer cell lines. Not expressed in normal tissues such as duct, mammary gland, lung, heart, liver, kidnay, bone marrow.

It localises to the cytoplasm. It is found in the cytoplasmic vesicle. The protein localises to the secretory vesicle. The protein resides in the secretory vesicle membrane. In terms of biological role, participates in the regulation of systemic glucose homeostasis, where it negatively regulates insulin granule biogenesis in pancreatic islet beta cells. Also regulates glucagon granule production in pancreatic alpha cells. Inhibits nuclear translocation of the transcriptional coregulator PHB2 and may enhance estrogen receptor alpha (ESR1) transcriptional activity in breast cancer cells. The protein is Brefeldin A-inhibited guanine nucleotide-exchange protein 3 of Homo sapiens (Human).